A 510-amino-acid chain; its full sequence is 2,3-bisphosphoglycerate-independent phosphoglycerate mutase (510 aa).

Positions 16 and 66 each coordinate Mn(2+). Ser-66 functions as the Phosphoserine intermediate in the catalytic mechanism. Residues His-127, 156 to 157 (RD), Arg-186, Arg-192, 257 to 260 (RADR), and Lys-333 contribute to the substrate site. Residues Asp-400, His-404, Asp-441, His-442, and His-460 each contribute to the Mn(2+) site.

Belongs to the BPG-independent phosphoglycerate mutase family. Monomer. It depends on Mn(2+) as a cofactor.

It carries out the reaction (2R)-2-phosphoglycerate = (2R)-3-phosphoglycerate. The protein operates within carbohydrate degradation; glycolysis; pyruvate from D-glyceraldehyde 3-phosphate: step 3/5. Its function is as follows. Catalyzes the interconversion of 2-phosphoglycerate and 3-phosphoglycerate. This Gluconobacter oxydans (strain 621H) (Gluconobacter suboxydans) protein is 2,3-bisphosphoglycerate-independent phosphoglycerate mutase.